The sequence spans 263 residues: Proliferating cell nuclear antigen (263 aa).

A DNA-binding region spans residues 61 to 80 (RCDRTINLGLSLANMSKALK).

Belongs to the PCNA family. As to quaternary structure, homotrimer. Forms a complex with activator 1 heteropentamer in the presence of ATP.

The protein resides in the nucleus. Its function is as follows. This protein is an auxiliary protein of DNA polymerase delta and is involved in the control of eukaryotic DNA replication by increasing the polymerase's processibility during elongation of the leading strand. The chain is Proliferating cell nuclear antigen (pcn-1) from Caenorhabditis elegans.